We begin with the raw amino-acid sequence, 478 residues long: Trigger factor (478 aa).

Over residues 154 to 167 (MAKDSRSFEPREEG) the composition is skewed to basic and acidic residues. Disordered stretches follow at residues 154–173 (MAKDSRSFEPREEGAEAQSG) and 444–478 (LFAEDDEADAVTGAAATDEKPSESSNEAAADKAAG). Residues 173–258 (GDRVTIDFVG…VKAVAAPGET (86 aa)) enclose the PPIase FKBP-type domain.

This sequence belongs to the FKBP-type PPIase family. Tig subfamily.

The protein resides in the cytoplasm. It catalyses the reaction [protein]-peptidylproline (omega=180) = [protein]-peptidylproline (omega=0). In terms of biological role, involved in protein export. Acts as a chaperone by maintaining the newly synthesized protein in an open conformation. Functions as a peptidyl-prolyl cis-trans isomerase. This Methylorubrum populi (strain ATCC BAA-705 / NCIMB 13946 / BJ001) (Methylobacterium populi) protein is Trigger factor.